A 64-amino-acid polypeptide reads, in one-letter code: Alpha-mammal toxin BmK-M8 (64 aa).

Residues 2-64 (RDAYIADSEN…ERIKEPGKCG (63 aa)) form the LCN-type CS-alpha/beta domain. 4 disulfide bridges follow: C12/C63, C16/C36, C22/C46, and C26/C48.

The protein belongs to the long (4 C-C) scorpion toxin superfamily. Sodium channel inhibitor family. Alpha subfamily. Expressed by the venom gland.

Its subcellular location is the secreted. In terms of biological role, alpha toxins bind voltage-independently at site-3 of sodium channels (Nav) and inhibit the inactivation of the activated channels, thereby blocking neuronal transmission. This acidic toxin has a weak toxicity and is active against mammals. This Olivierus martensii (Manchurian scorpion) protein is Alpha-mammal toxin BmK-M8.